A 113-amino-acid polypeptide reads, in one-letter code: Endoribonuclease SymE (113 aa).

A SpoVT-AbrB domain is found at 29–74 (SRYPDYSRIPAITLKGQWLEAAGFATGTAVVVKVMEGCIVLTAQPA).

This sequence belongs to the SymE family.

Its subcellular location is the cytoplasm. In terms of biological role, involved in the degradation and recycling of damaged RNA. It is itself a target for degradation by the ATP-dependent protease Lon. In Escherichia coli (strain ATCC 8739 / DSM 1576 / NBRC 3972 / NCIMB 8545 / WDCM 00012 / Crooks), this protein is Endoribonuclease SymE.